The sequence spans 72 residues: Small ribosomal subunit protein bS18 (72 aa).

The protein belongs to the bacterial ribosomal protein bS18 family. Part of the 30S ribosomal subunit. Forms a tight heterodimer with protein bS6.

Binds as a heterodimer with protein bS6 to the central domain of the 16S rRNA, where it helps stabilize the platform of the 30S subunit. This chain is Small ribosomal subunit protein bS18, found in Trichodesmium erythraeum (strain IMS101).